Reading from the N-terminus, the 272-residue chain is Shikimate dehydrogenase (NADP(+)) (272 aa).

Shikimate contacts are provided by residues 14–16 and threonine 61; that span reads SKS. Lysine 65 functions as the Proton acceptor in the catalytic mechanism. Glutamate 77 is a binding site for NADP(+). Residues asparagine 86 and aspartate 102 each contribute to the shikimate site. NADP(+) is bound by residues 126–130, 149–154, and methionine 213; these read GAGGA and NRTVSR. Tyrosine 215 is a binding site for shikimate. Glycine 237 is an NADP(+) binding site.

The protein belongs to the shikimate dehydrogenase family. In terms of assembly, homodimer.

It carries out the reaction shikimate + NADP(+) = 3-dehydroshikimate + NADPH + H(+). The protein operates within metabolic intermediate biosynthesis; chorismate biosynthesis; chorismate from D-erythrose 4-phosphate and phosphoenolpyruvate: step 4/7. Its function is as follows. Involved in the biosynthesis of the chorismate, which leads to the biosynthesis of aromatic amino acids. Catalyzes the reversible NADPH linked reduction of 3-dehydroshikimate (DHSA) to yield shikimate (SA). The chain is Shikimate dehydrogenase (NADP(+)) from Escherichia coli O157:H7.